Here is a 326-residue protein sequence, read N- to C-terminus: Pectate lyase plyB (326 aa).

A signal peptide spans 1-15 (MRFTPLFLLAAVAIA). Ca(2+) is bound by residues D133, D162, and D166. R219 is a catalytic residue.

The protein belongs to the polysaccharide lyase 1 family. The cofactor is Ca(2+).

The protein localises to the secreted. It carries out the reaction Eliminative cleavage of (1-&gt;4)-alpha-D-galacturonan to give oligosaccharides with 4-deoxy-alpha-D-galact-4-enuronosyl groups at their non-reducing ends.. Its pathway is glycan metabolism; pectin degradation; 2-dehydro-3-deoxy-D-gluconate from pectin: step 2/5. In terms of biological role, pectinolytic enzyme consist of four classes of enzymes: pectin lyase, polygalacturonase, pectin methylesterase and rhamnogalacturonase. Among pectinolytic enzymes, pectin lyase is the most important in depolymerization of pectin, since it cleaves internal glycosidic bonds of highly methylated pectins. The chain is Pectate lyase plyB (plyB) from Emericella nidulans (strain FGSC A4 / ATCC 38163 / CBS 112.46 / NRRL 194 / M139) (Aspergillus nidulans).